The chain runs to 308 residues: Putative glutamine amidotransferase Rv2859c (308 aa).

A disordered region spans residues 1–62; it reads MDLSASRSDG…ASPRLRSPLG (62 aa). 3 stretches are compositionally biased toward low complexity: residues 13 to 24, 31 to 42, and 49 to 61; these read PLRPASPRLRSP and PLRP…RSPL. In terms of domain architecture, Glutamine amidotransferase type-1 spans 78–301; sequence RTGVWDIPAG…VDAASGYAGR (224 aa). The Nucleophile role is filled by Cys177. Catalysis depends on residues His277 and Glu279. Residue Lys289 forms an Isoglutamyl lysine isopeptide (Lys-Gln) (interchain with Q-Cter in protein Pup) linkage.

The sequence is that of Putative glutamine amidotransferase Rv2859c from Mycobacterium tuberculosis (strain ATCC 25618 / H37Rv).